A 149-amino-acid chain; its full sequence is Urease accessory protein UreE (149 aa).

This sequence belongs to the UreE family.

It is found in the cytoplasm. In terms of biological role, involved in urease metallocenter assembly. Binds nickel. Probably functions as a nickel donor during metallocenter assembly. The polypeptide is Urease accessory protein UreE (Prochlorococcus marinus (strain MIT 9215)).